Reading from the N-terminus, the 317-residue chain is Putative GTPase PH0274 (317 aa).

GTP contacts are provided by residues 54–62 (GPPGAGKST), Asp196, and 231–233 (VGT).

The protein belongs to the SIMIBI class G3E GTPase family. ArgK/MeaB subfamily.

In terms of biological role, may have GTPase activity. May also bind and hydrolyze ATP. May function as chaperone. This chain is Putative GTPase PH0274, found in Pyrococcus horikoshii (strain ATCC 700860 / DSM 12428 / JCM 9974 / NBRC 100139 / OT-3).